A 262-amino-acid polypeptide reads, in one-letter code: Abhydrolase domain-containing protein AFT2-1 (262 aa).

Positions 260-262 (SKL) match the Peroxisomal targeting signal type 1 motif.

This sequence belongs to the AB hydrolase superfamily. AKT2 hydrolase family.

The protein localises to the peroxisome. It functions in the pathway mycotoxin biosynthesis. Abhydrolase domain-containing protein; part of the gene clusters that mediate the biosynthesis of the host-selective toxins (HSTs) AF-toxins responsible for Alternaria black spot of strawberry disease by the strawberry pathotype. AF-toxin I and III are valine derivatives of 2,3-dyhydroxy-isovaleric acid and 2-hydroxy-isovaleric acid respectively, while AF II is an isoleucine derivative of 2-hydroxy-valeric acid. These derivatives are bound to a 9,10-epoxy-8-hydroxy-9-methyl-decatrienoic acid (EDA) moiety. On cellular level, AF-toxins affect plasma membrane of susceptible cells and cause a sudden increase in loss of K(+) after a few minutes of toxin treatment. The aldo-keto reductase AFTS1 catalyzes the conversion of 2-keto-isovaleric acid (2-KIV) to 2-hydroxy-isovaleric acid (2-HIV) by reduction of its ketone to an alcohol. The acyl-CoA ligase AFT1, the hydrolase AFT2 and the enoyl-CoA hydratases AFT3 and AFT6, but also the polyketide synthase AFT9, the acyl-CoA dehydrogenase AFT10, the cytochrome P450 monooxygenase AFT11 and the oxidoreductase AFT12 are all involved in the biosynthesis of the AK-, AF- and ACT-toxin common EDA structural moiety. The exact function of each enzyme, and of additional enzymes identified within the AF-toxin clusters have still to be determined. The protein is Abhydrolase domain-containing protein AFT2-1 of Alternaria alternata (Alternaria rot fungus).